The following is a 94-amino-acid chain: Evasin P1104 (94 aa).

Residues 1 to 28 (MASNLFTIFQLAGFVAIVFIVNLHSVSA) form the signal peptide. 3 cysteine pairs are disulfide-bonded: C48–C66, C52–C68, and C62–C79. Residue N51 is glycosylated (N-linked (GlcNAc...) asparagine).

It localises to the secreted. In terms of biological role, salivary chemokine-binding protein which binds to host chemokines CXCL1, CXCL2, CXCL3, CXCL5, CXCL6, CXCL12 and CXCL13. This Ixodes ricinus (Common tick) protein is Evasin P1104.